The following is a 456-amino-acid chain: GTPase Der (456 aa).

EngA-type G domains follow at residues proline 4–aspartate 169 and valine 178–arginine 353. GTP contacts are provided by residues glycine 10–serine 17, aspartate 57–leucine 61, asparagine 120–glutamate 123, glycine 184–serine 191, aspartate 231–isoleucine 235, and asparagine 296–aspartate 299. The KH-like domain occupies arginine 354 to glutamine 439.

This sequence belongs to the TRAFAC class TrmE-Era-EngA-EngB-Septin-like GTPase superfamily. EngA (Der) GTPase family. In terms of assembly, associates with the 50S ribosomal subunit.

In terms of biological role, GTPase that plays an essential role in the late steps of ribosome biogenesis. The protein is GTPase Der of Prochlorococcus marinus (strain NATL1A).